Reading from the N-terminus, the 320-residue chain is o-succinylbenzoate synthase (320 aa).

Lysine 133 functions as the Proton donor in the catalytic mechanism. Mg(2+)-binding residues include aspartate 161, glutamate 190, and aspartate 213. Residue lysine 235 is the Proton acceptor of the active site.

Belongs to the mandelate racemase/muconate lactonizing enzyme family. MenC type 1 subfamily. A divalent metal cation is required as a cofactor.

It carries out the reaction (1R,6R)-6-hydroxy-2-succinyl-cyclohexa-2,4-diene-1-carboxylate = 2-succinylbenzoate + H2O. Its pathway is quinol/quinone metabolism; 1,4-dihydroxy-2-naphthoate biosynthesis; 1,4-dihydroxy-2-naphthoate from chorismate: step 4/7. The protein operates within quinol/quinone metabolism; menaquinone biosynthesis. Functionally, converts 2-succinyl-6-hydroxy-2,4-cyclohexadiene-1-carboxylate (SHCHC) to 2-succinylbenzoate (OSB). The polypeptide is o-succinylbenzoate synthase (Escherichia coli O157:H7).